Here is a 326-residue protein sequence, read N- to C-terminus: D-allose transport system permease protein AlsC (326 aa).

At 1-18 the chain is on the cytoplasmic side; it reads MGFTTRVKSEASEKKPFN. Residues 19-39 form a helical membrane-spanning segment; sequence FALFWDKYGTFFILAIIVAIF. Residues 40–70 are Periplasmic-facing; the sequence is GSLSPEYFLTTNNITQIFVQSSVTVLIGMGE. The helical transmembrane segment at 71–91 threads the bilayer; the sequence is FFAILVAGIDLSVGAILALSG. Topologically, residues 92-101 are cytoplasmic; it reads MVTAKLMLAG. A helical membrane pass occupies residues 102 to 122; sequence VDPFLAAMIGGVLVGGALGAI. Topologically, residues 123-124 are periplasmic; the sequence is NG. A helical transmembrane segment spans residues 125–145; it reads CLVNWTGLHPFIITLGTNAIF. At 146-149 the chain is on the cytoplasmic side; the sequence is RGIT. A helical transmembrane segment spans residues 150–170; sequence LVISDANSVYGFSFDFVNFFA. Residues 171–172 lie on the Periplasmic side of the membrane; it reads AS. A helical membrane pass occupies residues 173–193; it reads VIGIPVPVIFSLIVALILWFL. The Cytoplasmic segment spans residues 194 to 221; the sequence is TTRMRLGRNIYALGGNKNSAFYSGIDVK. The chain crosses the membrane as a helical span at residues 222-242; that stretch reads FHILVVFIISGVCAGLAGVVS. Residues 243-252 are Periplasmic-facing; the sequence is TARLGAAEPL. A helical transmembrane segment spans residues 253–273; that stretch reads AGMGFETYAIASAIIGGTSFF. Residues 274-278 lie on the Cytoplasmic side of the membrane; that stretch reads GGKGR. 2 helical membrane-spanning segments follow: residues 279–299 and 300–320; these read IFSV…LNIL and QVQT…AVAL. The Cytoplasmic portion of the chain corresponds to 321 to 326; that stretch reads DRLISK.

This sequence belongs to the binding-protein-dependent transport system permease family. AraH/RbsC subfamily.

Its subcellular location is the cell inner membrane. Functionally, part of the binding-protein-dependent transport system AlsBAC for D-allose; probably responsible for the translocation of the substrate across the membrane. This Escherichia coli (strain K12) protein is D-allose transport system permease protein AlsC (alsC).